The sequence spans 548 residues: Eukaryotic translation initiation factor 3 subunit D (548 aa).

Position 53 is an N6-acetyllysine (Lys53). Ser161 carries the post-translational modification Phosphoserine. The tract at residues 285–299 (DFDLPTVSETANEPP) is RNA gate. 2 disordered regions span residues 288–309 (LPTVSETANEPPQDEGNSFNSP) and 523–548 (PDGTFSSDEDEEEEEEEEEEEEEEET). The span at 291–309 (VSETANEPPQDEGNSFNSP) shows a compositional bias: polar residues. Residues Ser528 and Ser529 each carry the phosphoserine modification. The span at 529–548 (SDEDEEEEEEEEEEEEEEET) shows a compositional bias: acidic residues.

The protein belongs to the eIF-3 subunit D family. In terms of assembly, component of the eukaryotic translation initiation factor 3 (eIF-3) complex, which is composed of 13 subunits: EIF3A, EIF3B, EIF3C, EIF3D, EIF3E, EIF3F, EIF3G, EIF3H, EIF3I, EIF3J, EIF3K, EIF3L and EIF3M. The eIF-3 complex appears to include 3 stable modules: module A is composed of EIF3A, EIF3B, EIF3G and EIF3I; module B is composed of EIF3F, EIF3H, and EIF3M; and module C is composed of EIF3C, EIF3D, EIF3E, EIF3K and EIF3L. EIF3C of module C binds EIF3B of module A and EIF3H of module B, thereby linking the three modules. EIF3J is a labile subunit that binds to the eIF-3 complex via EIF3B. The eIF-3 complex interacts with RPS6KB1 under conditions of nutrient depletion. Mitogenic stimulation leads to binding and activation of a complex composed of MTOR and RPTOR, leading to phosphorylation and release of RPS6KB1 and binding of EIF4B to eIF-3.

The protein resides in the cytoplasm. Its function is as follows. mRNA cap-binding component of the eukaryotic translation initiation factor 3 (eIF-3) complex, a complex required for several steps in the initiation of protein synthesis of a specialized repertoire of mRNAs. The eIF-3 complex associates with the 40S ribosome and facilitates the recruitment of eIF-1, eIF-1A, eIF-2:GTP:methionyl-tRNAi and eIF-5 to form the 43S pre-initiation complex (43S PIC). The eIF-3 complex stimulates mRNA recruitment to the 43S PIC and scanning of the mRNA for AUG recognition. The eIF-3 complex is also required for disassembly and recycling of post-termination ribosomal complexes and subsequently prevents premature joining of the 40S and 60S ribosomal subunits prior to initiation. The eIF-3 complex specifically targets and initiates translation of a subset of mRNAs involved in cell proliferation, including cell cycling, differentiation and apoptosis, and uses different modes of RNA stem-loop binding to exert either translational activation or repression. In the eIF-3 complex, EIF3D specifically recognizes and binds the 7-methylguanosine cap of a subset of mRNAs. In Pongo abelii (Sumatran orangutan), this protein is Eukaryotic translation initiation factor 3 subunit D.